A 206-amino-acid chain; its full sequence is Thymidylate kinase (206 aa).

An ATP-binding site is contributed by glycine 11 to threonine 18.

This sequence belongs to the thymidylate kinase family.

It carries out the reaction dTMP + ATP = dTDP + ADP. Its function is as follows. Phosphorylation of dTMP to form dTDP in both de novo and salvage pathways of dTTP synthesis. This chain is Thymidylate kinase, found in Burkholderia lata (strain ATCC 17760 / DSM 23089 / LMG 22485 / NCIMB 9086 / R18194 / 383).